The primary structure comprises 853 residues: DNA mismatch repair protein MutS (853 aa).

An ATP-binding site is contributed by 614 to 621 (GPNMGGKS).

It belongs to the DNA mismatch repair MutS family.

This protein is involved in the repair of mismatches in DNA. It is possible that it carries out the mismatch recognition step. This protein has a weak ATPase activity. The protein is DNA mismatch repair protein MutS of Escherichia coli (strain SMS-3-5 / SECEC).